An 87-amino-acid polypeptide reads, in one-letter code: Glutaredoxin (87 aa).

The 87-residue stretch at methionine 1–aspartate 87 folds into the Glutaredoxin domain. An intrachain disulfide couples cysteine 11 to cysteine 14.

This sequence belongs to the glutaredoxin family. In terms of assembly, monomer.

Its subcellular location is the cytoplasm. Its function is as follows. Has a glutathione-disulfide oxidoreductase activity in the presence of NADPH and glutathione reductase. Reduces low molecular weight disulfides and proteins. This chain is Glutaredoxin (grx), found in Vibrio cholerae serotype O1 (strain ATCC 39315 / El Tor Inaba N16961).